The primary structure comprises 245 residues: Eukaryotic translation initiation factor 6 (245 aa).

This sequence belongs to the eIF-6 family. In terms of assembly, monomer. Associates with the 60S ribosomal subunit.

The protein resides in the cytoplasm. Its subcellular location is the nucleus. It localises to the nucleolus. In terms of biological role, binds to the 60S ribosomal subunit and prevents its association with the 40S ribosomal subunit to form the 80S initiation complex in the cytoplasm. May also be involved in ribosome biogenesis. This Drosophila melanogaster (Fruit fly) protein is Eukaryotic translation initiation factor 6.